The chain runs to 106 residues: Large ribosomal subunit protein eL42 (106 aa).

The segment at 36-56 (FAQGKRRYDRKQSGYGGQTKP) is disordered.

It belongs to the eukaryotic ribosomal protein eL42 family.

This chain is Large ribosomal subunit protein eL42 (RPL44), found in Phaffia rhodozyma (Yeast).